Reading from the N-terminus, the 309-residue chain is Porphobilinogen deaminase (309 aa).

Cysteine 242 is modified (S-(dipyrrolylmethanemethyl)cysteine).

It belongs to the HMBS family. As to quaternary structure, monomer. Dipyrromethane is required as a cofactor.

It catalyses the reaction 4 porphobilinogen + H2O = hydroxymethylbilane + 4 NH4(+). It functions in the pathway porphyrin-containing compound metabolism; protoporphyrin-IX biosynthesis; coproporphyrinogen-III from 5-aminolevulinate: step 2/4. Its function is as follows. Tetrapolymerization of the monopyrrole PBG into the hydroxymethylbilane pre-uroporphyrinogen in several discrete steps. This is Porphobilinogen deaminase from Shewanella woodyi (strain ATCC 51908 / MS32).